Consider the following 152-residue polypeptide: Putative rho GDP-dissociation inhibitor 2 (152 aa).

Belongs to the Rho GDI family.

Its subcellular location is the cytoplasm. Regulates the GDP/GTP exchange reaction of the Rho proteins by inhibiting the dissociation of GDP from them, and the subsequent binding of GTP to them. The sequence is that of Putative rho GDP-dissociation inhibitor 2 (rdiB) from Dictyostelium discoideum (Social amoeba).